We begin with the raw amino-acid sequence, 320 residues long: 2-oxoglutarate-dependent dioxygenase thnC (320 aa).

The Fe2OG dioxygenase domain occupies 174–278 (PLVQMKLIRY…HSCATFWHGD (105 aa)). Fe cation is bound by residues histidine 199, aspartate 201, and histidine 258. Residue arginine 268 coordinates 2-oxoglutarate.

The protein belongs to the iron/ascorbate-dependent oxidoreductase family. Fe(2+) is required as a cofactor.

The catalysed reaction is trihazone A + 2-oxoglutarate + O2 + H(+) = trihazone D + succinate + 2 CO2 + H2O. It functions in the pathway secondary metabolite biosynthesis. Functionally, 2-oxoglutarate-dependent dioxygenase; part of the gene cluster that produces the tetronate natural products trihazones. ThnC catalyzes the oxidative decarboxylation of trihazone A to trihazone D. The C4 hydrogen is first abstracted by the iron-oxo species generated in ThnC to give a tertiary radical at C4. This is followed by decarboxylation and removal of the second electron by the FeIII-OH center to give trihazone D. The pathway begins with the formation of trihazone A by the hybrid PKS-NRPS synthetase thnA and the trans-enoyl reductase thnE. Trihazone A is further decarboxylated by the 2-oxoglutarate-dependent dioxygenase thnC to produce trihazone D. The function of the FAD-dependent monooxygenase thnD has still to be identified. The polypeptide is 2-oxoglutarate-dependent dioxygenase thnC (Trichoderma harzianum (Hypocrea lixii)).